A 79-amino-acid polypeptide reads, in one-letter code: Large ribosomal subunit protein uL24 (79 aa).

It belongs to the universal ribosomal protein uL24 family. Part of the 50S ribosomal subunit.

Its function is as follows. One of two assembly initiator proteins, it binds directly to the 5'-end of the 23S rRNA, where it nucleates assembly of the 50S subunit. Functionally, one of the proteins that surrounds the polypeptide exit tunnel on the outside of the subunit. In Lactobacillus delbrueckii subsp. bulgaricus (strain ATCC BAA-365 / Lb-18), this protein is Large ribosomal subunit protein uL24.